A 650-amino-acid chain; its full sequence is Phosphatidylinositol 4-kinase gamma 7 (650 aa).

One can recognise a Ubiquitin-like; degenerate domain in the interval 46–103; sequence RRVFVQTETGCVLGMELDRSDNVHTVKRRLQIALNFPTEESSLTYGDMVLTNDLSAVR. The region spanning 166–463 is the PI3K/PI4K catalytic domain; that stretch reads GVEPLPVHSG…SVTERDVFSP (298 aa). Residues 172–178 form a G-loop region; the sequence is VHSGLGG. ATP is bound by residues 173–179, Lys-194, and 283–286; these read HSGLGGA and QKFV. The interval 316–324 is catalytic loop; it reads FNTDRHGGN. An activation loop region spans residues 343–369; that stretch reads PIDHGLCLPETLEDPYFEWIHWPQASL. Residue Asp-345 coordinates ATP. Disordered stretches follow at residues 508–534 and 560–595; these read SLGKLEESIKEEEEDEEEEEDKTENTV and STSMKNTHLSDTTRKNPKPLTRGKSENTSSGHKSAN. The segment covering 516 to 529 has biased composition (acidic residues); the sequence is IKEEEEDEEEEEDK. 2 stretches are compositionally biased toward polar residues: residues 560 to 569 and 585 to 595; these read STSMKNTHLS and ENTSSGHKSAN. Ser-593 carries the phosphoserine modification.

This sequence belongs to the PI3/PI4-kinase family. Type II PI4K subfamily.

The enzyme catalyses a 1,2-diacyl-sn-glycero-3-phospho-(1D-myo-inositol) + ATP = a 1,2-diacyl-sn-glycero-3-phospho-(1D-myo-inositol 4-phosphate) + ADP + H(+). Functionally, the phosphorylation of phosphatidylinositol (PI) to PI4P is the first committed step in the generation of phosphatidylinositol 4,5-bisphosphate (PIP2), a precursor of the second messenger inositol 1,4,5-trisphosphate (InsP3). Undergoes autophosphorylation and phosphorylates serine/threonine residues of protein substrates. The protein is Phosphatidylinositol 4-kinase gamma 7 of Arabidopsis thaliana (Mouse-ear cress).